Reading from the N-terminus, the 271-residue chain is Tryptophan synthase alpha chain (271 aa).

Residues Glu-53 and Asp-64 each act as proton acceptor in the active site.

Belongs to the TrpA family. In terms of assembly, tetramer of two alpha and two beta chains.

The catalysed reaction is (1S,2R)-1-C-(indol-3-yl)glycerol 3-phosphate + L-serine = D-glyceraldehyde 3-phosphate + L-tryptophan + H2O. Its pathway is amino-acid biosynthesis; L-tryptophan biosynthesis; L-tryptophan from chorismate: step 5/5. Functionally, the alpha subunit is responsible for the aldol cleavage of indoleglycerol phosphate to indole and glyceraldehyde 3-phosphate. This Streptomyces coelicolor (strain ATCC BAA-471 / A3(2) / M145) protein is Tryptophan synthase alpha chain.